Here is a 224-residue protein sequence, read N- to C-terminus: Probable molybdenum cofactor guanylyltransferase (224 aa).

GTP contacts are provided by residues 20-22, lysine 33, aspartate 88, and aspartate 117; that span reads LAG. Aspartate 117 serves as a coordination point for Mg(2+).

It belongs to the MobA family. The cofactor is Mg(2+).

The protein localises to the cytoplasm. It carries out the reaction Mo-molybdopterin + GTP + H(+) = Mo-molybdopterin guanine dinucleotide + diphosphate. Its function is as follows. Transfers a GMP moiety from GTP to Mo-molybdopterin (Mo-MPT) cofactor (Moco or molybdenum cofactor) to form Mo-molybdopterin guanine dinucleotide (Mo-MGD) cofactor. The polypeptide is Probable molybdenum cofactor guanylyltransferase (Methanosarcina mazei (strain ATCC BAA-159 / DSM 3647 / Goe1 / Go1 / JCM 11833 / OCM 88) (Methanosarcina frisia)).